A 215-amino-acid chain; its full sequence is Large ribosomal subunit protein uL4 (215 aa).

The interval 46-72 is disordered; that stretch reads TAKSKNRAEVSGGGRKPWAQKGGGRAR. Residues 56 to 71 show a composition bias toward gly residues; the sequence is SGGGRKPWAQKGGGRA.

The protein belongs to the universal ribosomal protein uL4 family. Part of the 50S ribosomal subunit.

Its function is as follows. One of the primary rRNA binding proteins, this protein initially binds near the 5'-end of the 23S rRNA. It is important during the early stages of 50S assembly. It makes multiple contacts with different domains of the 23S rRNA in the assembled 50S subunit and ribosome. In terms of biological role, forms part of the polypeptide exit tunnel. The chain is Large ribosomal subunit protein uL4 from Helicobacter pylori (strain ATCC 700392 / 26695) (Campylobacter pylori).